The following is a 143-amino-acid chain: MAKKVAGQLKLQVKAGSANPSPPIGPALGQRGINIMEFCKAFNAATQEMEKGMPIPVVITYYQDKSFTFAMKQPPMTYWLKKEAKITSGSKTPGKGAKVGSITKAQVKTIAEAKMKDLNAADIEGAMAMVEGSARAMGLEVVG.

This sequence belongs to the universal ribosomal protein uL11 family. Part of the ribosomal stalk of the 50S ribosomal subunit. Interacts with L10 and the large rRNA to form the base of the stalk. L10 forms an elongated spine to which 2 L12 dimers bind in a sequential fashion forming a pentameric L10(L12)2(L12)2 complex. Post-translationally, one or more lysine residues are methylated.

Functionally, forms part of the ribosomal stalk which helps the ribosome interact with GTP-bound translation factors. The polypeptide is Large ribosomal subunit protein uL11 (Agrobacterium fabrum (strain C58 / ATCC 33970) (Agrobacterium tumefaciens (strain C58))).